A 332-amino-acid polypeptide reads, in one-letter code: Protein FAM131B (332 aa).

A disordered region spans residues 1-22 (MDSTSSLHGSSLHRPSTEQTRT). At Ser-47 the chain carries Phosphoserine. A disordered region spans residues 95-114 (PTIQPQHSHEAVRRDTDAYS). Over residues 101-111 (HSHEAVRRDTD) the composition is skewed to basic and acidic residues. A phosphoserine mark is found at Ser-114 and Ser-117. A disordered region spans residues 221 to 332 (LGPAFDDSQP…FDEEEGDANN (112 aa)). Composition is skewed to basic and acidic residues over residues 272 to 281 (PVEEEKRPLA) and 288 to 302 (AGCR…REDP). A phosphoserine mark is found at Ser-295, Ser-297, and Ser-313. A Phosphothreonine modification is found at Thr-316. Phosphoserine is present on residues Ser-317, Ser-318, and Ser-322. Residues 323–332 (FDEEEGDANN) show a composition bias toward acidic residues.

Belongs to the FAM131 family.

In Mus musculus (Mouse), this protein is Protein FAM131B (Fam131b).